We begin with the raw amino-acid sequence, 451 residues long: MGKHYIPNSAHKDEMLKEIGFSSIEDLFSDVPKGMVKEFNLPEGKSEYEVFTELNETLSKNKTVLEMPSFLGAGTYFHYVPAHVKYLIERSEFLTAYTPYQPEISQGMLQALFEYQSLIAELVGLPIVNSSMYDWGTAMAEAALMSARVTKRNKFVVPKHLSPEKKLVLKTYTAGPGLETVEVPWDERGQMDIEKLKEAVEGAAGVYIEMPNFFGLLEENIREIGEIAHDAGALFVVGVDPTILGIVEAPGELGADIVVGEAAYFGNPMNFGGPRAGIFAVRNDRKLIRQMPGRIIGMTKDADGKRAFVMTLQTREQHIRRAKATSNICSNEALVAVAAAIHLATLGPKGVRELGEVILKNTAYLKKRLAEVGEIVFDGVNFKDVPVRFEVPYSVIHERLLERNIHGGYYIGKHFQELGETALFAATETTRKEWVDGLVDALREIIGEAEL.

Belongs to the GcvP family. N-terminal subunit subfamily. The glycine cleavage system is composed of four proteins: P, T, L and H. In this organism, the P 'protein' is a heterodimer of two subunits.

The enzyme catalyses N(6)-[(R)-lipoyl]-L-lysyl-[glycine-cleavage complex H protein] + glycine + H(+) = N(6)-[(R)-S(8)-aminomethyldihydrolipoyl]-L-lysyl-[glycine-cleavage complex H protein] + CO2. In terms of biological role, the glycine cleavage system catalyzes the degradation of glycine. The P protein binds the alpha-amino group of glycine through its pyridoxal phosphate cofactor; CO(2) is released and the remaining methylamine moiety is then transferred to the lipoamide cofactor of the H protein. This chain is Probable glycine dehydrogenase (decarboxylating) subunit 1, found in Thermococcus kodakarensis (strain ATCC BAA-918 / JCM 12380 / KOD1) (Pyrococcus kodakaraensis (strain KOD1)).